A 167-amino-acid chain; its full sequence is MATMMAMSSFAGAAVLPRGSARSLPALGRRTLVVRAQTEGPNAPPPNKPKASTSIWDAMAFSGPAPERINGRLAMVGFVTALAVEAGRGDGLLSQLGSGTGQAWFAYTVAMLSMASLVPLLQGESAEGRAGAIMNANAELWNGRFAMIGLVALAATEIITGTPFINV.

The transit peptide at 1–33 (MATMMAMSSFAGAAVLPRGSARSLPALGRRTLV) directs the protein to the chloroplast. 2 helical membrane-spanning segments follow: residues 101–121 (GQAW…VPLL) and 145–165 (FAMI…TPFI).

Belongs to the ELIP/psbS family.

The protein localises to the plastid. It localises to the chloroplast membrane. Probably involved in the integration of pigments into the mature pigment-protein complexes. This Hordeum vulgare (Barley) protein is Low molecular mass early light-inducible protein HV60, chloroplastic.